The following is an 87-amino-acid chain: UPF0250 protein BUsg_472 (87 aa).

This sequence belongs to the UPF0250 family.

The polypeptide is UPF0250 protein BUsg_472 (Buchnera aphidicola subsp. Schizaphis graminum (strain Sg)).